Reading from the N-terminus, the 401-residue chain is Phosphoglycerate kinase (401 aa).

Substrate is bound by residues 21-23, R36, 59-62, R119, and R160; these read DFN and HLGR. ATP contacts are provided by residues K212, E330, and 357–360; that span reads GGDS.

The protein belongs to the phosphoglycerate kinase family. Monomer.

The protein resides in the cytoplasm. The enzyme catalyses (2R)-3-phosphoglycerate + ATP = (2R)-3-phospho-glyceroyl phosphate + ADP. It functions in the pathway carbohydrate degradation; glycolysis; pyruvate from D-glyceraldehyde 3-phosphate: step 2/5. This chain is Phosphoglycerate kinase, found in Limosilactobacillus reuteri subsp. reuteri (strain JCM 1112) (Lactobacillus reuteri).